Here is a 175-residue protein sequence, read N- to C-terminus: Ribosome maturation factor RimM (175 aa).

The 73-residue stretch at 99 to 171 folds into the PRC barrel domain; sequence AGEYYWFQLK…RILFDLPDGL (73 aa).

The protein belongs to the RimM family. Binds ribosomal protein uS19.

It is found in the cytoplasm. An accessory protein needed during the final step in the assembly of 30S ribosomal subunit, possibly for assembly of the head region. Essential for efficient processing of 16S rRNA. May be needed both before and after RbfA during the maturation of 16S rRNA. It has affinity for free ribosomal 30S subunits but not for 70S ribosomes. The chain is Ribosome maturation factor RimM from Syntrophotalea carbinolica (strain DSM 2380 / NBRC 103641 / GraBd1) (Pelobacter carbinolicus).